We begin with the raw amino-acid sequence, 440 residues long: Zinc finger MYND domain-containing protein 10 (440 aa).

Residues cysteine 394, cysteine 397, cysteine 405, cysteine 408, cysteine 414, cysteine 418, histidine 426, and cysteine 430 each contribute to the Zn(2+) site. Residues 394–430 form an MYND-type zinc finger; the sequence is CGYCNAEASKRCSRCQNVWYCCRECQVKHWEKHGKTC.

This sequence belongs to the ZMYND10 family. In terms of assembly, interacts (via C-terminus) with DNAAF11 (via CS domain); this interaction stabilizes DNAAF11 at the protein level. Interacts (via C-terminus) with DNAL1; this interaction stabilizes DNAL1 at the protein level. Interacts with DNAAF4, HSPA8, IQUB, RUVBL2 and DYNTL5. Expressed in the testis. Expressed in the tracheal epithelium. Restricted to regions containing motile cilia.

The protein resides in the cytoplasm. It localises to the cytoskeleton. Its subcellular location is the microtubule organizing center. The protein localises to the centrosome. It is found in the centriolar satellite. The protein resides in the apical cell membrane. It localises to the dynein axonemal particle. Functionally, plays a role in axonemal structure organization and motility. Involved in axonemal pre-assembly of inner and outer dynein arms (IDA and ODA, respectively) for proper axoneme building for cilia motility. May act by indirectly regulating transcription of dynein proteins. The chain is Zinc finger MYND domain-containing protein 10 (Zmynd10) from Mus musculus (Mouse).